Here is a 495-residue protein sequence, read N- to C-terminus: MTKKYVVALDQGTTSSRAIIFDHDANIVSVSQREFTQIYPQAGWVEHDPMEIWASQSSTLIEVIARSGIHASEIASIGITNQRETTVIWDKQTGKPVYNAIVWQCRRSSEICEELKSQGLEAYIRDTTGLLLDPYFSGTKIKWILDNVSGVRERAERGELLFGTIDTWLVWKLTEGKVHVTDPTNASRTLLFNIHTQSWDKRILEALTIPESLLPQVKPSSAVYGKTRIAGEGGEISIAGIAGDQQSALFGQLCTEPGMAKNTYGTGCFLLMNTGEKAVKSNHGLLTTIAIGAKGEVNYALEGSVFMGGATIQWLRDELGLIRDAQDTEYFASRVESTNGVYLVPAFVGLGAPYWDPSARGALVGLTRGSNRNHIIRAALEAIAYQSRDLLDAMAKDSGVELKKLKVDGGAVANDFLMQFQADITSVEVQRPAVTETTAMGAAFLAGLAVGFWDSTSELKHRADIDKSFMPSISEEQKDELYAGWQKAVSQTING.

An ADP-binding site is contributed by T13. The ATP site is built by T13, T14, and S15. Residue T13 participates in sn-glycerol 3-phosphate binding. Position 17 (R17) interacts with ADP. Sn-glycerol 3-phosphate is bound by residues R83, E84, Y135, and D244. The glycerol site is built by R83, E84, Y135, D244, and Q245. T266 and G309 together coordinate ADP. Residues T266, G309, Q313, and G410 each contribute to the ATP site. G410 and N414 together coordinate ADP.

The protein belongs to the FGGY kinase family.

It catalyses the reaction glycerol + ATP = sn-glycerol 3-phosphate + ADP + H(+). The protein operates within polyol metabolism; glycerol degradation via glycerol kinase pathway; sn-glycerol 3-phosphate from glycerol: step 1/1. Inhibited by fructose 1,6-bisphosphate (FBP). Its function is as follows. Key enzyme in the regulation of glycerol uptake and metabolism. Catalyzes the phosphorylation of glycerol to yield sn-glycerol 3-phosphate. In Shewanella woodyi (strain ATCC 51908 / MS32), this protein is Glycerol kinase.